Reading from the N-terminus, the 96-residue chain is MSRISIEQVKHVADLARLAMTDEEAELFTKQLDAIITFAEQLNELDTENVPPTSHVLDMRNVMREDEPEPGLPREEVLKNAPDQQDGQFRVPAILE.

The segment at Arg64–Glu96 is disordered.

This sequence belongs to the GatC family. In terms of assembly, heterotrimer of A, B and C subunits.

It catalyses the reaction L-glutamyl-tRNA(Gln) + L-glutamine + ATP + H2O = L-glutaminyl-tRNA(Gln) + L-glutamate + ADP + phosphate + H(+). It carries out the reaction L-aspartyl-tRNA(Asn) + L-glutamine + ATP + H2O = L-asparaginyl-tRNA(Asn) + L-glutamate + ADP + phosphate + 2 H(+). Allows the formation of correctly charged Asn-tRNA(Asn) or Gln-tRNA(Gln) through the transamidation of misacylated Asp-tRNA(Asn) or Glu-tRNA(Gln) in organisms which lack either or both of asparaginyl-tRNA or glutaminyl-tRNA synthetases. The reaction takes place in the presence of glutamine and ATP through an activated phospho-Asp-tRNA(Asn) or phospho-Glu-tRNA(Gln). The protein is Aspartyl/glutamyl-tRNA(Asn/Gln) amidotransferase subunit C of Geobacillus thermodenitrificans (strain NG80-2).